A 106-amino-acid chain; its full sequence is Circadian clock oscillator protein KaiB (106 aa).

The protein belongs to the KaiB family. As to quaternary structure, the KaiABC complex composition changes during the circadian cycle to control KaiC phosphorylation. Complexes KaiC(6), KaiA(2-4):KaiC(6), KaiB(6):KaiC(6) and KaiC(6):KaiB(6):KaiA(12) are among the most important forms, many form cooperatively. Undergoes a major conformational rearrangment; in the free state forms homotetramers as a dimer of dimers. When bound to the CI domain of KaiC switches to a monomeric thioredoxin-fold (KaiB(fs)). KaiB(fs) binds CikA, leading it to dephosphorylate phospho-RpaA.

Its function is as follows. Key component of the KaiABC oscillator complex, which constitutes the main circadian regulator in cyanobacteria. Complex composition changes during the circadian cycle to control KaiC phosphorylation. KaiA stimulates KaiC autophosphorylation, while KaiB sequesters KaiA, leading to KaiC autodephosphorylation. Phospho-Ser-431 KaiC accumulation triggers binding of KaiB to form the KaiB(6):KaiC(6) complex, leading to changes in output regulators CikA and SasA. KaiB switches to a thioredoxin-like fold (KaiB(fs)) when bound to KaiC. KaiB(6):KaiC(6) formation exposes a site for KaiA binding that sequesters KaiA from KaiC, making the KaiC(6):KaiB(6):KaiA(12) complex that results in KaiC autodephosphorylation. Functionally, a metamorphic protein which reversibly switches between an inactive tetrameric fold and a rare, thioredoxin-like monomeric fold (KaiB(fs)). KaiB(fs) binds phospho-KaiC, KaiA and CikA. KaiA and CikA compete for binding to KaiB(fs), and KaiB(fs) and SasA compete for binding to KaiC, thus the clock oscillator and output signal pathway are tightly coupled. The sequence is that of Circadian clock oscillator protein KaiB from Gloeothece citriformis (strain PCC 7424) (Cyanothece sp. (strain PCC 7424)).